The primary structure comprises 664 residues: Probable 3',5'-cyclic phosphodiesterase pde-1 (664 aa).

Disordered regions lie at residues 24-60 (TSSA…SIKI) and 113-142 (RNQK…KSYD). 2 stretches are compositionally biased toward basic and acidic residues: residues 28–38 (SEEHGDSDKKL) and 114–130 (NQKE…EKEP). One can recognise a PDEase domain in the interval 256–634 (VQCPIPPEIA…AHWKERAAKE (379 aa)). The active-site Proton donor is the histidine 333. 4 residues coordinate a divalent metal cation: histidine 337, histidine 373, aspartate 374, and aspartate 480. 2 disordered regions span residues 564–597 (DSLF…TSPS) and 630–664 (RAAK…VTTN). Over residues 630–644 (RAAKEEEERKIKEAA) the composition is skewed to basic and acidic residues.

The protein belongs to the cyclic nucleotide phosphodiesterase family. As to quaternary structure, interacts with cmd-1 in the presence of Ca(2+). Requires a divalent metal cation as cofactor. Expressed in AFD thermosensory neurons.

It carries out the reaction a nucleoside 3',5'-cyclic phosphate + H2O = a nucleoside 5'-phosphate + H(+). Redundantly with pde-5, plays a role in the AFD thermosensory neurons to regulate microvilli receptive ending morphology, possibly by regulating cGMP levels. The sequence is that of Probable 3',5'-cyclic phosphodiesterase pde-1 (pde-1) from Caenorhabditis elegans.